A 206-amino-acid polypeptide reads, in one-letter code: Imidazoleglycerol-phosphate dehydratase (206 aa).

Belongs to the imidazoleglycerol-phosphate dehydratase family.

It is found in the cytoplasm. The enzyme catalyses D-erythro-1-(imidazol-4-yl)glycerol 3-phosphate = 3-(imidazol-4-yl)-2-oxopropyl phosphate + H2O. It participates in amino-acid biosynthesis; L-histidine biosynthesis; L-histidine from 5-phospho-alpha-D-ribose 1-diphosphate: step 6/9. The sequence is that of Imidazoleglycerol-phosphate dehydratase from Cutibacterium acnes (strain DSM 16379 / KPA171202) (Propionibacterium acnes).